We begin with the raw amino-acid sequence, 276 residues long: Large ribosomal subunit protein uL2 (276 aa).

The disordered stretch occupies residues 219–268 (TVRGSVMNPNDHPHGGGEGRQPVGRKSPMTPWGKPALGLKTRNKKAKSSK).

This sequence belongs to the universal ribosomal protein uL2 family. Part of the 50S ribosomal subunit. Forms a bridge to the 30S subunit in the 70S ribosome.

In terms of biological role, one of the primary rRNA binding proteins. Required for association of the 30S and 50S subunits to form the 70S ribosome, for tRNA binding and peptide bond formation. It has been suggested to have peptidyltransferase activity; this is somewhat controversial. Makes several contacts with the 16S rRNA in the 70S ribosome. The protein is Large ribosomal subunit protein uL2 of Lactococcus lactis subsp. cremoris (strain MG1363).